Here is a 1214-residue protein sequence, read N- to C-terminus: Ubiquitin carboxyl-terminal hydrolase 36 (1214 aa).

Residues alanine 124–arginine 169 form a disordered region. Low complexity predominate over residues asparagine 132–asparagine 143. Residues arginine 144–proline 161 show a composition bias toward polar residues. Positions alanine 192–aspartate 502 constitute a USP domain. Catalysis depends on cysteine 201, which acts as the Nucleophile. The active-site Proton acceptor is the histidine 461. Residues serine 509–serine 523 show a composition bias toward low complexity. Positions serine 509–arginine 532 are disordered. Phosphoserine occurs at positions 553 and 555. Disordered regions lie at residues glycine 631–threonine 819, histidine 836–serine 964, glutamine 977–valine 1001, histidine 1048–glutamine 1161, and lysine 1176–serine 1214. The segment covering alanine 633–asparagine 651 has biased composition (low complexity). A compositionally biased stretch (acidic residues) spans serine 666–aspartate 685. Position 717 is a phosphothreonine (threonine 717). Phosphoserine is present on residues serine 727 and serine 729. Low complexity-rich tracts occupy residues glutamine 735–leucine 751 and lysine 785–lysine 816. Polar residues predominate over residues glutamate 856–asparagine 868. Positions serine 869–serine 878 are enriched in low complexity. Serine 891 carries the post-translational modification Phosphoserine. Threonine 894 carries the post-translational modification Phosphothreonine. The residue at position 897 (serine 897) is a Phosphoserine. A compositionally biased stretch (acidic residues) spans aspartate 915–valine 942. The residue at position 951 (threonine 951) is a Phosphothreonine. The span at serine 983–valine 1001 shows a compositional bias: polar residues. Residues asparagine 1058 to asparagine 1076 show a composition bias toward low complexity. Residues glutamate 1089 to alanine 1098 show a composition bias toward basic and acidic residues. Low complexity-rich tracts occupy residues glutamine 1178–alanine 1188 and glutamine 1197–serine 1214.

Belongs to the peptidase C19 family. As to quaternary structure, interacts with atms/PAF1, but not with CycT.

The protein resides in the nucleus. It is found in the nucleolus. It catalyses the reaction Thiol-dependent hydrolysis of ester, thioester, amide, peptide and isopeptide bonds formed by the C-terminal Gly of ubiquitin (a 76-residue protein attached to proteins as an intracellular targeting signal).. In terms of biological role, required for maintaining multiple types of adult stem cells, including male and female germline, epithelial follicle cell and intestinal stem cells. May function as a transcriptional repressor by continually deubiquiting histone H2B at the promoters of genes critical for cellular differentiation, thereby preventing histone H3 'Lys-4' trimethylation (H3K4). Controls selective autophagy activation by ubiquitinated proteins. The chain is Ubiquitin carboxyl-terminal hydrolase 36 (Usp36) from Drosophila virilis (Fruit fly).